Consider the following 154-residue polypeptide: Calmodulin-like protein 4 (154 aa).

EF-hand domains are found at residues 7–42, 43–78, 80–115, and 116–151; these read EQMV…LGLE, PTDQ…KMKD, DGDE…LGEK, and MTDE…AERK. Residues Asp-20, Asn-22, Asp-24, Cys-26, Glu-31, Asp-56, Asp-58, Asn-60, Glu-67, Asp-93, Asp-95, Asn-97, and Glu-104 each contribute to the Ca(2+) site. Lys-115 carries the post-translational modification N6,N6,N6-trimethyllysine. Ca(2+) is bound by residues Asp-129, Asp-131, Asp-133, Gln-135, and Glu-140.

It belongs to the calmodulin family.

In terms of biological role, potential calcium sensor. This chain is Calmodulin-like protein 4 (CML4), found in Oryza sativa subsp. japonica (Rice).